A 227-amino-acid chain; its full sequence is ATP synthase F(0) complex subunit a (227 aa).

Helical transmembrane passes span 9 to 29 (FASP…LPWV), 69 to 89 (WALL…LGLL), 98 to 118 (QLSL…IIGM), 132 to 152 (EGTP…SLFI), 165 to 185 (LTAG…LMPM), and 190 to 210 (AILT…VAMI).

Belongs to the ATPase A chain family. Component of the ATP synthase complex composed at least of ATP5F1A/subunit alpha, ATP5F1B/subunit beta, ATP5MC1/subunit c (homooctomer), MT-ATP6/subunit a, MT-ATP8/subunit 8, ATP5ME/subunit e, ATP5MF/subunit f, ATP5MG/subunit g, ATP5MK/subunit k, ATP5MJ/subunit j, ATP5F1C/subunit gamma, ATP5F1D/subunit delta, ATP5F1E/subunit epsilon, ATP5PF/subunit F6, ATP5PB/subunit b, ATP5PD/subunit d, ATP5PO/subunit OSCP. ATP synthase complex consists of a soluble F(1) head domain (subunits alpha(3) and beta(3)) - the catalytic core - and a membrane F(0) domain - the membrane proton channel (subunits c, a, 8, e, f, g, k and j). These two domains are linked by a central stalk (subunits gamma, delta, and epsilon) rotating inside the F1 region and a stationary peripheral stalk (subunits F6, b, d, and OSCP). Interacts with DNAJC30; interaction is direct.

It is found in the mitochondrion inner membrane. The catalysed reaction is H(+)(in) = H(+)(out). Its function is as follows. Subunit a, of the mitochondrial membrane ATP synthase complex (F(1)F(0) ATP synthase or Complex V) that produces ATP from ADP in the presence of a proton gradient across the membrane which is generated by electron transport complexes of the respiratory chain. ATP synthase complex consist of a soluble F(1) head domain - the catalytic core - and a membrane F(1) domain - the membrane proton channel. These two domains are linked by a central stalk rotating inside the F(1) region and a stationary peripheral stalk. During catalysis, ATP synthesis in the catalytic domain of F(1) is coupled via a rotary mechanism of the central stalk subunits to proton translocation. With the subunit c (ATP5MC1), forms the proton-conducting channel in the F(0) domain, that contains two crucial half-channels (inlet and outlet) that facilitate proton movement from the mitochondrial intermembrane space (IMS) into the matrix. Protons are taken up via the inlet half-channel and released through the outlet half-channel, following a Grotthuss mechanism. This chain is ATP synthase F(0) complex subunit a, found in Carassius auratus (Goldfish).